Consider the following 444-residue polypeptide: Trigger factor (444 aa).

The region spanning 160–245 (DMQVTFDFEG…VKQVEKPKLP (86 aa)) is the PPIase FKBP-type domain.

This sequence belongs to the FKBP-type PPIase family. Tig subfamily.

Its subcellular location is the cytoplasm. The enzyme catalyses [protein]-peptidylproline (omega=180) = [protein]-peptidylproline (omega=0). Its function is as follows. Involved in protein export. Acts as a chaperone by maintaining the newly synthesized protein in an open conformation. Functions as a peptidyl-prolyl cis-trans isomerase. The sequence is that of Trigger factor from Acinetobacter baumannii (strain AB0057).